Here is a 395-residue protein sequence, read N- to C-terminus: Enolase (395 aa).

Substrate-binding residues include histidine 136 and glutamate 145. Residue glutamate 188 is the Proton donor of the active site. Positions 223, 271, and 296 each coordinate Mg(2+). Substrate contacts are provided by glutamate 271 and aspartate 296. Lysine 321 (proton acceptor) is an active-site residue. Substrate contacts are provided by residues 348-351 (SHRS) and lysine 372.

Belongs to the enolase family. In terms of assembly, homodimer. Requires Mg(2+) as cofactor.

The protein resides in the cytoplasm. The enzyme catalyses (2R)-2-phosphoglycerate = phosphoenolpyruvate + H2O. It functions in the pathway carbohydrate degradation; glycolysis; pyruvate from D-glyceraldehyde 3-phosphate: step 4/5. The sequence is that of Enolase from Alligator mississippiensis (American alligator).